The sequence spans 371 residues: MKFLDQAKVYIKSGDGGAGSVSFRREKFIEFGGPDGGDGGRGGDVWVEAVNGLNTLIDFRFQQHFKATIGTHGMGRNRAGAKGADVTLKVPVGTQIFEEDEETLICDLTREGQRYRVAAGGNGGFGNAYFKSSVNQAPDWANPGLPGEEKTIWLRLKLIADAGLVGLPNAGKSTFLAAVTRARPKIANYPFTTLHPNLGVATIDGQEFVLADIPGLIEGAHEGVGIGDRFLGHVERTRVLLHLVSAQEEKVGKAYKTVKHELEAYGNELTDKPEIVALSQIDVVDEETLKKKKRELARACGKTPFLISAITGSGMTEVLRALRDIIVEANGGAGQEAPMKALKVRHRDMQSSGNEGESEDNSDRDDEEQQG.

One can recognise an Obg domain in the interval 1–159 (MKFLDQAKVY…KTIWLRLKLI (159 aa)). Residues 160 to 327 (ADAGLVGLPN…VLRALRDIIV (168 aa)) enclose the OBG-type G domain. Residues 166–173 (GLPNAGKS), 191–195 (FTTLH), 212–215 (DIPG), 279–282 (SQID), and 308–310 (SAI) each bind GTP. Mg(2+)-binding residues include S173 and T193. Residues 337-371 (APMKALKVRHRDMQSSGNEGESEDNSDRDDEEQQG) are disordered. Acidic residues predominate over residues 356–371 (GESEDNSDRDDEEQQG).

This sequence belongs to the TRAFAC class OBG-HflX-like GTPase superfamily. OBG GTPase family. In terms of assembly, monomer. Mg(2+) serves as cofactor.

The protein localises to the cytoplasm. In terms of biological role, an essential GTPase which binds GTP, GDP and possibly (p)ppGpp with moderate affinity, with high nucleotide exchange rates and a fairly low GTP hydrolysis rate. Plays a role in control of the cell cycle, stress response, ribosome biogenesis and in those bacteria that undergo differentiation, in morphogenesis control. The polypeptide is GTPase Obg (Rhizobium rhizogenes (strain K84 / ATCC BAA-868) (Agrobacterium radiobacter)).